Here is a 491-residue protein sequence, read N- to C-terminus: MNDHQKNHATSQDDNTKSTPSKNSKHIKIKLWHFILVILGIILLTSIITVVSTILISHQKSGLNKEQRANLKKIEYVYQTLNKDYYKKQSSDKLTQSAIDGMVKELKDPYSEYMTAEETKQFNEGVSGDFVGIGAEMQKKNEQISVTSPMKDSPAEKAGIQPKDIVTQVNHHSVVGKPLDQVVKMVRGKKGTYVTLTIKRGSQEKDIKIKRDTIHVKSVEYEKKGNVGVLTINKFQSNTSGELKSAIIKAHKQGIRHIILDLRNNPGGLLDEAVKMANIFIDKGNTVVQLEKGKDKEELKTSNQALKQAKDMKVSILVNEGSASASEVFTGAMKDYHKAKVYGSKTFGKGIVQTIREFSDGSLIKYTEMKWLTPDGHYIHGKGIRPDVSISTPKYQSLNVIPDNKTYHQGEKDKNVKTMKIGLKALGYPIDNETNIFDEQLESAIKTFQQDNNLKVNGNFDKKTNDKFTEKLVEKANKKDTVLNDLLNKLK.

A disordered region spans residues 1 to 22 (MNDHQKNHATSQDDNTKSTPSK). Residues 8-22 (HATSQDDNTKSTPSK) show a composition bias toward polar residues. Residues 31-51 (LWHFILVILGIILLTSIITVV) traverse the membrane as a helical segment. The PDZ domain occupies 119–201 (TKQFNEGVSG…TYVTLTIKRG (83 aa)). Active-site charge relay system residues include Ser-324, Asp-335, and Lys-349.

This sequence belongs to the peptidase S41A family.

Its subcellular location is the cell membrane. The chain is Probable CtpA-like serine protease from Staphylococcus epidermidis (strain ATCC 35984 / DSM 28319 / BCRC 17069 / CCUG 31568 / BM 3577 / RP62A).